Here is a 239-residue protein sequence, read N- to C-terminus: Pyridoxine 5'-phosphate synthase (239 aa).

Asparagine 7 contributes to the 3-amino-2-oxopropyl phosphate binding site. A 1-deoxy-D-xylulose 5-phosphate-binding site is contributed by 9–10 (DH). Arginine 18 contributes to the 3-amino-2-oxopropyl phosphate binding site. Catalysis depends on histidine 43, which acts as the Proton acceptor. 2 residues coordinate 1-deoxy-D-xylulose 5-phosphate: arginine 45 and histidine 50. Glutamate 70 acts as the Proton acceptor in catalysis. Threonine 100 provides a ligand contact to 1-deoxy-D-xylulose 5-phosphate. Residue histidine 191 is the Proton donor of the active site. Residues glycine 192 and 213–214 (GH) contribute to the 3-amino-2-oxopropyl phosphate site.

Belongs to the PNP synthase family. As to quaternary structure, homooctamer; tetramer of dimers.

The protein resides in the cytoplasm. It carries out the reaction 3-amino-2-oxopropyl phosphate + 1-deoxy-D-xylulose 5-phosphate = pyridoxine 5'-phosphate + phosphate + 2 H2O + H(+). The protein operates within cofactor biosynthesis; pyridoxine 5'-phosphate biosynthesis; pyridoxine 5'-phosphate from D-erythrose 4-phosphate: step 5/5. Its function is as follows. Catalyzes the complicated ring closure reaction between the two acyclic compounds 1-deoxy-D-xylulose-5-phosphate (DXP) and 3-amino-2-oxopropyl phosphate (1-amino-acetone-3-phosphate or AAP) to form pyridoxine 5'-phosphate (PNP) and inorganic phosphate. The protein is Pyridoxine 5'-phosphate synthase of Syntrophotalea carbinolica (strain DSM 2380 / NBRC 103641 / GraBd1) (Pelobacter carbinolicus).